Reading from the N-terminus, the 397-residue chain is Purine ribonucleoside efflux pump NepI (397 aa).

Residues 1–21 (MNENIAEKFRADGVARPNWSA) lie on the Cytoplasmic side of the membrane. The helical transmembrane segment at 22-42 (VFAVAFCVACLITVEFLPVSL) threads the bilayer. At 43-54 (LTPMAQDLGISE) the chain is on the periplasmic side. The chain crosses the membrane as a helical span at residues 55–75 (GVAGQSVTVTAFVAMFSSLFI). Residues 76 to 85 (TQIIQATDRR) lie on the Cytoplasmic side of the membrane. Residues 86–106 (YIVILFAVLLTASCLMVSFAN) traverse the membrane as a helical segment. S107 is a topological domain (periplasmic). The helical transmembrane segment at 108-128 (FTLLLLGRACLGLALGGFWAM) threads the bilayer. The Cytoplasmic portion of the chain corresponds to 129–147 (SASLTMRLVPARTVPKALS). The helical transmembrane segment at 148-168 (VIFGAVSIALVIAAPLGSFLG) threads the bilayer. Residues 169–175 (GIIGWRN) lie on the Periplasmic side of the membrane. A helical membrane pass occupies residues 176–196 (VFNAAAVMGVLCVIWVVKSLP). The Cytoplasmic portion of the chain corresponds to 197–215 (SLPGEPSHQKQNMFSLLQR). The chain crosses the membrane as a helical span at residues 216-236 (PGVMAGMIAIFMSFAGQFAFF). Topologically, residues 237-255 (TYIRPVYMNLAGFDVDGLT) are periplasmic. The chain crosses the membrane as a helical span at residues 256 to 276 (LVLLSFGIASFVGTSFSSYVL). At 277–281 (KRSVK) the chain is on the cytoplasmic side. The helical transmembrane segment at 282 to 302 (LALAGAPLLLALSALTLIVWG) threads the bilayer. Topologically, residues 303–305 (SDK) are periplasmic. The helical transmembrane segment at 306 to 326 (TVAAVIAIIWGLAFALVPVGW) threads the bilayer. The Cytoplasmic segment spans residues 327 to 343 (STWITRSLADQAEKAGS). A helical transmembrane segment spans residues 344–364 (IQVAVIQLANTCGAAVGGYAL). The Periplasmic segment spans residues 365 to 366 (DN). The chain crosses the membrane as a helical span at residues 367-387 (FGLLSPLALSGGLMLLTALVV). Topologically, residues 388–397 (AAKVRITPMS) are cytoplasmic.

It belongs to the major facilitator superfamily. DHA1 family. NepI (TC 2.A.1.2.26) subfamily.

The protein localises to the cell inner membrane. It catalyses the reaction inosine(in) + H(+)(out) = inosine(out) + H(+)(in). The enzyme catalyses guanosine(in) + H(+)(out) = guanosine(out) + H(+)(in). Involved in the efflux of purine ribonucleosides, such as inosine and guanosine. This is Purine ribonucleoside efflux pump NepI from Salmonella paratyphi B (strain ATCC BAA-1250 / SPB7).